The sequence spans 645 residues: 1,4-alpha-glucan branching enzyme GlgB (645 aa).

Aspartate 309 (nucleophile) is an active-site residue. The active-site Proton donor is the glutamate 352. The tract at residues 619–645 (VKTRKGSKKQDGSKTKVRSNVTSRGKR) is disordered. Positions 636–645 (RSNVTSRGKR) are enriched in polar residues.

The protein belongs to the glycosyl hydrolase 13 family. GlgB subfamily. Monomer.

The catalysed reaction is Transfers a segment of a (1-&gt;4)-alpha-D-glucan chain to a primary hydroxy group in a similar glucan chain.. The protein operates within glycan biosynthesis; glycogen biosynthesis. Catalyzes the formation of the alpha-1,6-glucosidic linkages in glycogen by scission of a 1,4-alpha-linked oligosaccharide from growing alpha-1,4-glucan chains and the subsequent attachment of the oligosaccharide to the alpha-1,6 position. The sequence is that of 1,4-alpha-glucan branching enzyme GlgB from Bacillus cereus (strain AH820).